Consider the following 191-residue polypeptide: uncharacterized protein (191 aa).

Transmembrane regions (helical) follow at residues 4–24 (IYRQ…VLIF), 26–46 (KQLI…YFLC), 68–88 (GKGA…IDDI), 90–110 (AVFF…IIGI), 135–155 (LILY…SAFI), and 168–188 (LYLP…CSLM).

It is found in the cell membrane. This is an uncharacterized protein from Methanocaldococcus jannaschii (strain ATCC 43067 / DSM 2661 / JAL-1 / JCM 10045 / NBRC 100440) (Methanococcus jannaschii).